Here is a 300-residue protein sequence, read N- to C-terminus: Platelet-derived growth factor D (300 aa).

In terms of domain architecture, CUB spans 1-114; it reads QVTGNGHVQS…PGFKIYYSFV (114 aa). Cysteines 53 and 75 form a disulfide. N220 is a glycosylation site (N-linked (GlcNAc...) asparagine).

It belongs to the PDGF/VEGF growth factor family. In terms of assembly, homodimer; disulfide-linked. Interacts with PDGFRB homodimers, and with heterodimers formed by PDGFRA and PDGFRB. Activated by proteolytic cleavage. Proteolytic removal of the N-terminal CUB domain releasing the core domain is necessary for unmasking the receptor-binding epitopes of the core domain. Cleavage after Arg-191 or Arg-193 by urokinase plasminogen activator gives rise to the active form.

It is found in the secreted. In terms of biological role, growth factor that plays an essential role in the regulation of embryonic development, cell proliferation, cell migration, survival and chemotaxis. Potent mitogen for cells of mesenchymal origin. Plays an important role in wound healing. Induces macrophage recruitment, increased interstitial pressure, and blood vessel maturation during angiogenesis. Can initiate events that lead to a mesangial proliferative glomerulonephritis, including influx of monocytes and macrophages and production of extracellular matrix. The sequence is that of Platelet-derived growth factor D (PDGFD) from Oryctolagus cuniculus (Rabbit).